The following is a 153-amino-acid chain: Pheromone-binding protein Gp-9 (153 aa).

The N-terminal stretch at 1–19 is a signal peptide; the sequence is MKTFVLHIFIFALVAFASA. Intrachain disulfides connect Cys37/Cys77, Cys73/Cys129, and Cys118/Cys138.

The protein belongs to the PBP/GOBP family. Homodimer.

The protein resides in the secreted. Colony queen number, a major feature of social organization, is associated with worker genotype for Gp-9. Colonies are headed by either a single reproductive queen (monogyne form) or multiple queens (polygyne form). Differences in worker Gp-9 genotypes between social forms may cause differences in workers' abilities to recognize queens and regulate their numbers. This is Pheromone-binding protein Gp-9 from Solenopsis invicta (Red imported fire ant).